A 339-amino-acid chain; its full sequence is UPF0324 membrane protein SpyM3_0740 (339 aa).

9 consecutive transmembrane segments (helical) span residues lysine 7–leucine 24, phenylalanine 28–histidine 50, glycine 57–leucine 79, alanine 84–glycine 106, alanine 118–isoleucine 140, alanine 150–leucine 172, phenylalanine 256–valine 275, phenylalanine 290–leucine 307, and alanine 314–leucine 336.

It belongs to the UPF0324 family.

It localises to the cell membrane. This chain is UPF0324 membrane protein SpyM3_0740, found in Streptococcus pyogenes serotype M3 (strain ATCC BAA-595 / MGAS315).